Here is a 661-residue protein sequence, read N- to C-terminus: Sodium/potassium/calcium exchanger 2 (661 aa).

The Cytoplasmic portion of the chain corresponds to 1–38 (MDLQQSTTITSLEKWCLDESLSGCRRHYSVKKKLKLIR). The helical transmembrane segment at 39-59 (VLGLFMGLVAISTVSFSISAF) threads the bilayer. Over 60-132 (SETDTQSTGE…DIFSLEERRK (73 aa)) the chain is Extracellular. Positions 99–120 (PQPPLSKEGESENSTDHAQGDY) are disordered. Basic and acidic residues predominate over residues 105–120 (KEGESENSTDHAQGDY). Asparagine 111 carries an N-linked (GlcNAc...) asparagine glycan. Residues 133-153 (GAIILHVIGMIYMFIALAIVC) traverse the membrane as a helical segment. Topologically, residues 154–178 (DEFFVPSLTVITEKLGISDDVAGAT) are cytoplasmic. An Alpha-1 repeat occupies 174–214 (VAGATFMAAGGSAPELFTSLIGVFIAHSNVGIGTIVGSAVF). A helical transmembrane segment spans residues 179-199 (FMAAGGSAPELFTSLIGVFIA). At 200–204 (HSNVG) the chain is on the extracellular side. The chain crosses the membrane as a helical span at residues 205–225 (IGTIVGSAVFNILFVIGMCAL). The Cytoplasmic portion of the chain corresponds to 226–243 (FSREILNLTWWPLFRDVS). Residues 244–264 (FYIVDLIMLIIFFLDNVIMWW) traverse the membrane as a helical segment. A topological domain (extracellular) is located at residue glutamate 265. The helical transmembrane segment at 266–286 (SLLLLTAYFCYVVFMKFNVQV) threads the bilayer. The Cytoplasmic portion of the chain corresponds to 287–497 (EKWVKQMINR…PDVRKPSSRK (211 aa)). The interval 306-336 (EAQAKPSAARDKDEPTLPAKPRLQRGGSSAS) is disordered. A phosphoserine mark is found at serine 336 and serine 340. Positions 397 to 439 (DENERQNGAANHVEKIELPNSTSTDVEMTPSSDASEPVQNGNL) are disordered. Over residues 415-439 (PNSTSTDVEMTPSSDASEPVQNGNL) the composition is skewed to polar residues. The chain crosses the membrane as a helical span at residues 498 to 518 (FFPITFFGSITWIAVFSYLMV). Residues 519–533 (WWAHQVGETIGISEE) lie on the Extracellular side of the membrane. Residues 534–554 (IMGLTILAAGTSIPDLITSVI) traverse the membrane as a helical segment. The Alpha-2 repeat unit spans residues 541 to 572 (AAGTSIPDLITSVIVARKGLGDMAVSSSVGSN). Over 555–569 (VARKGLGDMAVSSSV) the chain is Cytoplasmic. Residues 570-590 (GSNIFDITVGLPLPWLLYTVI) form a helical membrane-spanning segment. Residues 591 to 602 (HRFQPVAVSSNG) are Extracellular-facing. The chain crosses the membrane as a helical span at residues 603–623 (LFCAIVLLFIMLLFVILSIAL). Topologically, residues 624-630 (CKWRMNK) are cytoplasmic. A helical transmembrane segment spans residues 631-651 (ILGFIMFGLYFVFLVVSVLLE). The Extracellular segment spans residues 652–661 (DRILTCPVSI).

It belongs to the Ca(2+):cation antiporter (CaCA) (TC 2.A.19) family. SLC24A subfamily.

The protein resides in the cell membrane. The catalysed reaction is Ca(2+)(out) + K(+)(out) + 4 Na(+)(in) = Ca(2+)(in) + K(+)(in) + 4 Na(+)(out). Functionally, calcium, potassium:sodium antiporter that transports 1 Ca(2+) and 1 K(+) in exchange for 4 Na(+). Required for learming and memory by regulating neuronal Ca(2+), which is essential for the development of synaptic plasticity. This chain is Sodium/potassium/calcium exchanger 2 (SLC24A2), found in Homo sapiens (Human).